The chain runs to 461 residues: MTSLTLFDTMARRKRDFEPTDPGRVTMYVCGPTVYSYAHIGNARPAVVFDTLFRVLRRLYGEDQVIYARNITDVDDKIIETARESGKPIEDITSHYADIYRADMGALGVTLPTIEPHATDHIPEMIGMVQNLVYSGHAYEADGHVLFDVSSYEKYGRLSNRDLDDMIAGARVEVASYKRSPADFVLWKPAKDDEPGWDSPWGRGRPGWHLECSAMSEKHLGKTIDIHGGGTDLVFPHHENEIAQSVCAHKGAPMANYWLHNGFLTMGTDKMSKSLGNVQLVHDLIKDYPGEVLRYALLTAHYRAPLTWTADLLAKTRRSLDRIYGVLRRLGEIEAAPSDVPPAFLEALHDDLNTPKALSELFQLAGNANKALSDVEKAQAKGELLAAAGMLGLGQADPDAWFGLTDLDPAERARIDDLIVRRQTAREEKDWPTADAVRDELNALKVQVDDGPEGSTWRKLD.

Cys-30 contacts Zn(2+). The 'HIGH' region motif lies at 32–42; it reads PTVYSYAHIGN. 3 residues coordinate Zn(2+): Cys-212, His-237, and Glu-241. The 'KMSKS' region signature appears at 270 to 274; that stretch reads KMSKS. An ATP-binding site is contributed by Lys-273.

The protein belongs to the class-I aminoacyl-tRNA synthetase family. In terms of assembly, monomer. Zn(2+) is required as a cofactor.

The protein localises to the cytoplasm. It carries out the reaction tRNA(Cys) + L-cysteine + ATP = L-cysteinyl-tRNA(Cys) + AMP + diphosphate. The chain is Cysteine--tRNA ligase from Maricaulis maris (strain MCS10) (Caulobacter maris).